A 214-amino-acid chain; its full sequence is Peptidyl-tRNA hydrolase (214 aa).

Tyrosine 14 contacts tRNA. Histidine 19 acts as the Proton acceptor in catalysis. Positions 64, 66, and 113 each coordinate tRNA. The tract at residues 184 to 214 is disordered; sequence RINAPPPKPEKKRGSETSDPSAESADHAGGG.

This sequence belongs to the PTH family. As to quaternary structure, monomer.

It is found in the cytoplasm. The catalysed reaction is an N-acyl-L-alpha-aminoacyl-tRNA + H2O = an N-acyl-L-amino acid + a tRNA + H(+). Functionally, hydrolyzes ribosome-free peptidyl-tRNAs (with 1 or more amino acids incorporated), which drop off the ribosome during protein synthesis, or as a result of ribosome stalling. Catalyzes the release of premature peptidyl moieties from peptidyl-tRNA molecules trapped in stalled 50S ribosomal subunits, and thus maintains levels of free tRNAs and 50S ribosomes. The polypeptide is Peptidyl-tRNA hydrolase (Roseiflexus castenholzii (strain DSM 13941 / HLO8)).